Consider the following 273-residue polypeptide: Formamidopyrimidine-DNA glycosylase (273 aa).

Proline 2 acts as the Schiff-base intermediate with DNA in catalysis. Glutamate 3 acts as the Proton donor in catalysis. Lysine 58 (proton donor; for beta-elimination activity) is an active-site residue. Positions 92, 111, and 153 each coordinate DNA. The FPG-type zinc finger occupies 238–272; sequence MVYARDGQECLSCSSSIIKTKHSGRSTFYCKSCQK. Arginine 262 functions as the Proton donor; for delta-elimination activity in the catalytic mechanism.

This sequence belongs to the FPG family. As to quaternary structure, monomer. Requires Zn(2+) as cofactor.

The catalysed reaction is Hydrolysis of DNA containing ring-opened 7-methylguanine residues, releasing 2,6-diamino-4-hydroxy-5-(N-methyl)formamidopyrimidine.. It catalyses the reaction 2'-deoxyribonucleotide-(2'-deoxyribose 5'-phosphate)-2'-deoxyribonucleotide-DNA = a 3'-end 2'-deoxyribonucleotide-(2,3-dehydro-2,3-deoxyribose 5'-phosphate)-DNA + a 5'-end 5'-phospho-2'-deoxyribonucleoside-DNA + H(+). In terms of biological role, involved in base excision repair of DNA damaged by oxidation or by mutagenic agents. Acts as a DNA glycosylase that recognizes and removes damaged bases. Has a preference for oxidized purines, such as 7,8-dihydro-8-oxoguanine (8-oxoG). Has AP (apurinic/apyrimidinic) lyase activity and introduces nicks in the DNA strand. Cleaves the DNA backbone by beta-delta elimination to generate a single-strand break at the site of the removed base with both 3'- and 5'-phosphates. This is Formamidopyrimidine-DNA glycosylase from Rickettsia bellii (strain OSU 85-389).